Consider the following 118-residue polypeptide: Ribonuclease P protein component (118 aa).

Belongs to the RnpA family. Consists of a catalytic RNA component (M1 or rnpB) and a protein subunit.

It catalyses the reaction Endonucleolytic cleavage of RNA, removing 5'-extranucleotides from tRNA precursor.. RNaseP catalyzes the removal of the 5'-leader sequence from pre-tRNA to produce the mature 5'-terminus. It can also cleave other RNA substrates such as 4.5S RNA. The protein component plays an auxiliary but essential role in vivo by binding to the 5'-leader sequence and broadening the substrate specificity of the ribozyme. The polypeptide is Ribonuclease P protein component (Shewanella denitrificans (strain OS217 / ATCC BAA-1090 / DSM 15013)).